The primary structure comprises 304 residues: Glycine--tRNA ligase alpha subunit (304 aa).

The protein belongs to the class-II aminoacyl-tRNA synthetase family. As to quaternary structure, tetramer of two alpha and two beta subunits.

Its subcellular location is the cytoplasm. It carries out the reaction tRNA(Gly) + glycine + ATP = glycyl-tRNA(Gly) + AMP + diphosphate. The sequence is that of Glycine--tRNA ligase alpha subunit from Streptococcus agalactiae serotype III (strain NEM316).